The sequence spans 76 residues: Small ribosomal subunit protein bS16 (76 aa).

This sequence belongs to the bacterial ribosomal protein bS16 family.

This is Small ribosomal subunit protein bS16 from Helicobacter pylori (strain P12).